Here is a 275-residue protein sequence, read N- to C-terminus: Transmembrane protein 106B (275 aa).

The interval 1–24 (MGKSFSHLPLHSNKEDGYDGMTST) is disordered. Glycine 2 carries the N-myristoyl glycine lipid modification. Residues 2-97 (GKSFSHLPLH…QRLRPRRTKL (96 aa)) lie on the Cytoplasmic side of the membrane. A helical membrane pass occupies residues 98 to 118 (YVMASVFVCLLLSGLAVFFLF). Topologically, residues 119 to 275 (PRSIDVKYIG…EYLNVLQPQQ (157 aa)) are lumenal. Asparagine 146, asparagine 152, asparagine 165, and asparagine 184 each carry an N-linked (GlcNAc...) asparagine glycan. A disulfide bond links cysteine 215 and cysteine 254. Asparagine 257 carries N-linked (GlcNAc...) asparagine glycosylation.

This sequence belongs to the TMEM106 family. Can form homomers. Interacts (via N-terminus) with MAP6 (via C-terminus). Interacts (via C-terminus) with the vacuolar-type ATPase subunit ATP6AP1. Interacts (via N-terminus) with AP2M1 and CLTC. Interacts with TMEM106C.

The protein localises to the late endosome membrane. It localises to the lysosome membrane. It is found in the cell membrane. In terms of biological role, in neurons, involved in the transport of late endosomes/lysosomes. May be involved in dendrite morphogenesis and maintenance by regulating lysosomal trafficking. May act as a molecular brake for retrograde transport of late endosomes/lysosomes, possibly via its interaction with MAP6. In motoneurons, may mediate the axonal transport of lysosomes and axonal sorting at the initial segment. It remains unclear whether TMEM106B affects the transport of moving lysosomes in the anterograde or retrograde direction in neurites and whether it is particularly important in the sorting of lysosomes in axons or in dendrites. In neurons, may also play a role in the regulation of lysosomal size and responsiveness to stress. Required for proper lysosomal acidification. The protein is Transmembrane protein 106B (TMEM106B) of Bos taurus (Bovine).